An 830-amino-acid polypeptide reads, in one-letter code: Post-transcriptional regulator MKT1 (830 aa).

A Glycyl lysine isopeptide (Lys-Gly) (interchain with G-Cter in ubiquitin) cross-link involves residue Lys4. The segment at 130–380 (RSRGWTQWNN…SPATTVTKNA (251 aa)) is interaction with PBP1. Residues 347 to 400 (DSEKNNKDGKKSNLSSPSSASSSASPATTVTKNASEKLTYEKSSTKEVRKPRDI) are disordered. A phosphoserine mark is found at Ser358, Ser362, and Ser371. Residues 361–373 (SSPSSASSSASPA) show a composition bias toward low complexity. Positions 380 to 400 (ASEKLTYEKSSTKEVRKPRDI) are enriched in basic and acidic residues.

The protein belongs to the XPG/RAD2 endonuclease family. In terms of assembly, interacts (via C-terminus) with PBP1 (via C-terminus).

The protein resides in the cytoplasm. The protein localises to the cytosol. In terms of biological role, involved in 3'-UTR mediated RNA regulation. Binds to RNA-binding and RNA regulatory proteins. Complexes with PAB1-binding protein to promote mRNA interactions with poly(A)-binding protein. Promotes mating-type switching in mother cells by positively regulating HO expression. The sequence is that of Post-transcriptional regulator MKT1 (MKT1) from Saccharomyces cerevisiae (strain ATCC 204508 / S288c) (Baker's yeast).